Reading from the N-terminus, the 110-residue chain is Phosphoribosyl-AMP cyclohydrolase (110 aa).

Position 80 (Asp-80) interacts with Mg(2+). Cys-81 is a binding site for Zn(2+). Residues Asp-82 and Asp-84 each contribute to the Mg(2+) site. Zn(2+)-binding residues include Cys-97 and Cys-104.

It belongs to the PRA-CH family. Homodimer. It depends on Mg(2+) as a cofactor. Requires Zn(2+) as cofactor.

The protein resides in the cytoplasm. It carries out the reaction 1-(5-phospho-beta-D-ribosyl)-5'-AMP + H2O = 1-(5-phospho-beta-D-ribosyl)-5-[(5-phospho-beta-D-ribosylamino)methylideneamino]imidazole-4-carboxamide. It participates in amino-acid biosynthesis; L-histidine biosynthesis; L-histidine from 5-phospho-alpha-D-ribose 1-diphosphate: step 3/9. In terms of biological role, catalyzes the hydrolysis of the adenine ring of phosphoribosyl-AMP. This Clostridium botulinum (strain 657 / Type Ba4) protein is Phosphoribosyl-AMP cyclohydrolase.